The following is a 573-amino-acid chain: MRTENTATLNLIWGALILEELARIGVQHVCMAPGSRSTPLTLAAAQQTKLKRHLHFDERGLGFMALGLAKASRAPVAIITTSGTAVANLYPAIVEAWLTHVPLIVLSGDRPPELLDCGANQAIVQPGIFAHYAKQINLPTPDAHIAPQALLTTIDEAVANQTRPVHINCMYREPLYPSELGTPILDTESPYLKPLQTWLQLSRPYTQYGKYKQVSNPSDDAIMRFVHGKGVIVAGTLTPEQDPQQLIALSQKIGWPLLTDAQSQLRQHPAAIGNIDQLLQHPKARNLLQEADRVLVFGGRLLSKRLISYLAEQHWHSYWQVLPEQNRLDPSHNAKHVWHANAAQFTALNWYRSSSANWANTLITYNDELHNLFVRNIDHGEFGEAQVVRAIANTRPLEQQLFIGNSLPVRLYDMYAPVSCCTATTYTNRGASGIDGLLATACGLAAHEGKPTSLIIGDLSQLHDLNSLAIAKSLASPLVIVILNNDGGNIFNLLPVPNEQVRNDYYRLSHGLEFGYAAAMFNLPYNQVDNLADFQDSYNEALDFQGASIIEVNVSQTQASDQIAELNLWVKQS.

The protein belongs to the TPP enzyme family. MenD subfamily. As to quaternary structure, homodimer. It depends on Mg(2+) as a cofactor. Mn(2+) is required as a cofactor. Requires thiamine diphosphate as cofactor.

It carries out the reaction isochorismate + 2-oxoglutarate + H(+) = 5-enolpyruvoyl-6-hydroxy-2-succinyl-cyclohex-3-ene-1-carboxylate + CO2. Its pathway is quinol/quinone metabolism; 1,4-dihydroxy-2-naphthoate biosynthesis; 1,4-dihydroxy-2-naphthoate from chorismate: step 2/7. It participates in quinol/quinone metabolism; menaquinone biosynthesis. In terms of biological role, catalyzes the thiamine diphosphate-dependent decarboxylation of 2-oxoglutarate and the subsequent addition of the resulting succinic semialdehyde-thiamine pyrophosphate anion to isochorismate to yield 2-succinyl-5-enolpyruvyl-6-hydroxy-3-cyclohexene-1-carboxylate (SEPHCHC). In Shewanella sp. (strain W3-18-1), this protein is 2-succinyl-5-enolpyruvyl-6-hydroxy-3-cyclohexene-1-carboxylate synthase.